A 790-amino-acid polypeptide reads, in one-letter code: DNA topoisomerase 1 (790 aa).

Polar residues-rich tracts occupy residues 1-18, 44-54, and 61-70; these read MKSN…SNVM, KLSSGALNGNS, and SNLSCPSPYT. Residues 1-196 form a disordered region; sequence MKSNPGITVI…KKRPDVSASV (196 aa). Over residues 158 to 167 the composition is skewed to acidic residues; that stretch reads QEEAAADDDP. Residues 168–181 show a composition bias toward polar residues; it reads SISNRNKKSTTPAS. 3 interaction with DNA regions span residues 426 to 427, 490 to 495, and 581 to 583; these read KY, RAGNEK, and TAK. Residues 433–790 enclose the Topo IB-type catalytic domain; the sequence is SSSLKGKVTR…AMDVVLIFRF (358 aa). Tyr749 acts as the O-(3'-phospho-DNA)-tyrosine intermediate in catalysis.

The protein belongs to the type IB topoisomerase family.

It localises to the nucleus. It catalyses the reaction ATP-independent breakage of single-stranded DNA, followed by passage and rejoining.. In terms of biological role, releases the supercoiling and torsional tension of DNA introduced during the DNA replication and transcription by transiently cleaving and rejoining one strand of the DNA duplex. Introduces a single-strand break via transesterification at a target site in duplex DNA. The scissile phosphodiester is attacked by the catalytic tyrosine of the enzyme, resulting in the formation of a DNA-(3'-phosphotyrosyl)-enzyme intermediate and the expulsion of a 5'-OH DNA strand. The free DNA strand then rotates around the intact phosphodiester bond on the opposing strand, thus removing DNA supercoils. Finally, in the religation step, the DNA 5'-OH attacks the covalent intermediate to expel the active-site tyrosine and restore the DNA phosphodiester backbone. The chain is DNA topoisomerase 1 (TOP1) from Daucus carota (Wild carrot).